The following is a 140-amino-acid chain: Oleosin Cor a 13 (140 aa).

2 helical membrane-spanning segments follow: residues 31–51 (GSLL…LTLA) and 75–95 (GFLA…WIYR).

The protein belongs to the oleosin family. As to expression, expressed in seeds.

It is found in the lipid droplet. The protein resides in the membrane. May have a structural role to stabilize the lipid body during desiccation of the seed by preventing coalescence of the oil. Probably interacts with both lipid and phospholipid moieties of lipid bodies. May also provide recognition signals for specific lipase anchorage in lipolysis during seedling growth. The polypeptide is Oleosin Cor a 13 (Corylus avellana (European hazel)).